The following is a 75-amino-acid chain: Large ribosomal subunit protein bL28 (75 aa).

Belongs to the bacterial ribosomal protein bL28 family.

This Baumannia cicadellinicola subsp. Homalodisca coagulata protein is Large ribosomal subunit protein bL28.